A 225-amino-acid polypeptide reads, in one-letter code: Thylakoid lumenal 17.9 kDa protein, chloroplastic (225 aa).

It localises to the plastid. Its subcellular location is the chloroplast thylakoid lumen. The polypeptide is Thylakoid lumenal 17.9 kDa protein, chloroplastic (Arabidopsis thaliana (Mouse-ear cress)).